A 245-amino-acid chain; its full sequence is 14-3-3 protein zeta/delta (245 aa).

M1 carries the N-acetylmethionine modification. K3 bears the N6-acetyllysine mark. Phosphoserine; by PKA is present on S58. K68 carries the N6-acetyllysine modification. Residues S184, S207, and S210 each carry the phosphoserine modification. Phosphothreonine; by CK1 is present on T232.

Belongs to the 14-3-3 family. Homodimer. Heterodimerizes with YWHAE. Homo- and heterodimerization is inhibited by phosphorylation on Ser-58. Interacts with FOXO4, NOXA1, SSH1 and ARHGEF2. Interacts with CDK16 and with WEE1 (C-terminal). Interacts with MLF1 (phosphorylated form); the interaction retains it in the cytoplasm. Interacts with BSPRY. Interacts with Thr-phosphorylated ITGB2. Interacts with Pseudomonas aeruginosa exoS (unphosphorylated form). Interacts with BAX; the interaction occurs in the cytoplasm. Under stress conditions, MAPK8-mediated phosphorylation releases BAX to mitochondria. Interacts with phosphorylated RAF1; the interaction is inhibited when YWHAZ is phosphorylated on Thr-232. Interacts with TP53; the interaction enhances p53 transcriptional activity. The Ser-58 phosphorylated form inhibits this interaction and p53 transcriptional activity. Interacts with ABL1 (phosphorylated form); the interaction retains ABL1 in the cytoplasm. Interacts with PKA-phosphorylated AANAT; the interaction modulates AANAT enzymatic activity by increasing affinity for arylalkylamines and acetyl-CoA and protecting the enzyme from dephosphorylation and proteasomal degradation. It may also prevent thiol-dependent inactivation. Interacts with AKT1; the interaction phosphorylates YWHAZ and modulates dimerization. Interacts with GAB2. Interacts with SAMSN1. Interacts with BCL2L11 and TLK2. Interacts with the 'Thr-369' phosphorylated form of DAPK2. Interacts with PI4KB, TBC1D22A and TBC1D22B. Interacts with ZFP36L1 (via phosphorylated form); this interaction occurs in a p38 MAPK- and AKT-signaling pathways. Interacts with SLITRK1. Interacts with AK5, LDB1, MADD, PDE1A and SMARCB1. Interacts with ARHGEF7 and GIT1. Interacts with MEFV. Interacts with ADAM22 (via C-terminus). The delta, brain-specific form differs from the zeta form in being phosphorylated. Phosphorylation on Ser-184 by MAPK8; promotes dissociation of BAX and translocation of BAX to mitochondria. Phosphorylation on Thr-232; inhibits binding of RAF1. Phosphorylated on Ser-58 by PKA and protein kinase C delta type catalytic subunit in a sphingosine-dependent fashion. Phosphorylation on Ser-58 by PKA; disrupts homodimerization and heterodimerization with YHAE and TP53.

Its subcellular location is the cytoplasm. It is found in the melanosome. Adapter protein implicated in the regulation of a large spectrum of both general and specialized signaling pathways. Binds to a large number of partners, usually by recognition of a phosphoserine or phosphothreonine motif. Binding generally results in the modulation of the activity of the binding partner. Promotes cytosolic retention and inactivation of TFEB transcription factor by binding to phosphorylated TFEB. Induces ARHGEF7 activity on RAC1 as well as lamellipodia and membrane ruffle formation. In neurons, regulates spine maturation through the modulation of ARHGEF7 activity. This chain is 14-3-3 protein zeta/delta (Ywhaz), found in Mus musculus (Mouse).